The chain runs to 215 residues: Cytochrome b6 (215 aa).

A helical membrane pass occupies residues 32 to 52; it reads IFYCLGGVTLICFLVQFATGF. Residue cysteine 35 participates in heme c binding. Residues histidine 86 and histidine 100 each coordinate heme b. Helical transmembrane passes span 90-110, 116-136, and 186-206; these read ASMM…TGGF, LTWV…VTGY, and AHTF…FLMI. Residues histidine 187 and histidine 202 each contribute to the heme b site.

The protein belongs to the cytochrome b family. PetB subfamily. In terms of assembly, the 4 large subunits of the cytochrome b6-f complex are cytochrome b6, subunit IV (17 kDa polypeptide, PetD), cytochrome f and the Rieske protein, while the 4 small subunits are PetG, PetL, PetM and PetN. The complex functions as a dimer. Heme b serves as cofactor. Requires heme c as cofactor.

The protein localises to the cell inner membrane. Its function is as follows. Component of the cytochrome b6-f complex, which mediates electron transfer between photosystem II (PSII) and photosystem I (PSI), cyclic electron flow around PSI, and state transitions. The protein is Cytochrome b6 of Gloeobacter violaceus (strain ATCC 29082 / PCC 7421).